The primary structure comprises 1116 residues: Disease resistance protein RGA5 (1116 aa).

Residues 1-177 (MDAPASFSLG…HHGVSANLVG (177 aa)) are structured coiled coil (CC) domain. In terms of domain architecture, NB-ARC spans 182–466 (KTKLNRWLSD…WSAEGFVSAN (285 aa)). LRR repeat units lie at residues 608-631 (LFQL…ISGL), 633-653 (YLET…LVHL), 654-675 (PNLL…GCMR), 677-701 (LRTL…ELTN), 732-755 (LSNL…DISS), 786-808 (LHKL…DNLT), 810-830 (LPSL…RFIF), 835-857 (LPVL…AGAM), and 858-882 (PNLQ…LFGI). The disordered stretch occupies residues 935–971 (EEESHPLEKQHHKREKGSSAGHGVLEKESVEDSEKNT). The segment covering 958–971 (VLEKESVEDSEKNT) has biased composition (basic and acidic residues). The 70-residue stretch at 997-1066 (RTKIVVKVHM…KCGLAELLMV (70 aa)) folds into the HMA domain. An HMA-like domain region spans residues 1000–1070 (IVVKVHMPCG…AELLMVELVE (71 aa)).

The protein belongs to the disease resistance NB-LRR family. As to quaternary structure, forms homodimer or heterodimer with RGA4 through its coiled coil (CC) domain. Interacts with AVR1-Pia and AVR-CO39 through its C-terminal part containing the HMA-like domain. In terms of tissue distribution, expressed in leaves.

It is found in the cytoplasm. Disease resistance (R) protein that recognizes the AVR-Pia and AVR1-CO39 effector avirulence proteins from M.oryzae. Resistance proteins guard the plant against pathogens that contain an appropriate avirulence protein via an indirect interaction with this avirulence protein. That triggers a defense system including the hypersensitive response, which restricts the pathogen growth. Contribution of RGA4 is required to recognize the effector avirulence proteins AVR-Pia and AVR1-CO39 from M.oryzae. Acts as a repressor of the RGA4-mediated cell death activation. Upon infection, recognition and binding of the AVR effectors relieve the RGA5-mediated repression and triggers the hypersensitive response. Immune response triggered by the RGA4-RGA5 -mediated recognition of AVR1-CO39 confers resistance to X.oryzae pathovars. In Oryza sativa subsp. japonica (Rice), this protein is Disease resistance protein RGA5.